We begin with the raw amino-acid sequence, 102 residues long: Small integral membrane protein 29 (102 aa).

Asn-3 is a glycosylation site (N-linked (GlcNAc...) asparagine). Residues 21–41 (VLGPFFLITLVGVVVAVVMYV) form a helical membrane-spanning segment.

In terms of tissue distribution, expressed in spleen, thymus, prostate, testis, uterus, small intestine, colon and peripheral blood leukocytes.

The protein localises to the membrane. In Homo sapiens (Human), this protein is Small integral membrane protein 29.